The sequence spans 301 residues: MDPQQIKAALGSGLLSFPVTPFDAENRFAAAPYQKHVEWLSGFDAPVLFAAGGTGEFFSLTPDEIPAIVRAAKESAGKTAIVSGCGYGTEIARGIARSVEAAGGDGILLLPHYLIDAPQEGLYAHVRAVCQATGMGVMVYNRDNAVLQADTLARLCDDCPNLVGFKDGTGDIGLVRQITAKMGDRLTYLGGMPTAELFAEAYLGASFTTYSSAVFNFVPALANKFYAALRAGDRATCESILNSFFYPFMELRSRRKGYAVAAVKAGVRLVGFDAGPVRAPLSDLTGEEEKILEALIDAHRE.

Belongs to the DapA family.

It catalyses the reaction 5-dehydro-4-deoxy-D-glucarate + H(+) = 2,5-dioxopentanoate + CO2 + H2O. Its pathway is carbohydrate acid metabolism; D-glucarate degradation; 2,5-dioxopentanoate from D-glucarate: step 2/2. The protein is Probable 5-dehydro-4-deoxyglucarate dehydratase of Cereibacter sphaeroides (strain KD131 / KCTC 12085) (Rhodobacter sphaeroides).